The following is a 441-amino-acid chain: Argininosuccinate lyase (441 aa).

Belongs to the lyase 1 family. Argininosuccinate lyase subfamily.

Its subcellular location is the cytoplasm. It carries out the reaction 2-(N(omega)-L-arginino)succinate = fumarate + L-arginine. Its pathway is amino-acid biosynthesis; L-arginine biosynthesis; L-arginine from L-ornithine and carbamoyl phosphate: step 3/3. This Thermoanaerobacter pseudethanolicus (strain ATCC 33223 / 39E) (Clostridium thermohydrosulfuricum) protein is Argininosuccinate lyase.